We begin with the raw amino-acid sequence, 421 residues long: Gamma-glutamyl phosphate reductase (421 aa).

It belongs to the gamma-glutamyl phosphate reductase family.

Its subcellular location is the cytoplasm. It carries out the reaction L-glutamate 5-semialdehyde + phosphate + NADP(+) = L-glutamyl 5-phosphate + NADPH + H(+). Its pathway is amino-acid biosynthesis; L-proline biosynthesis; L-glutamate 5-semialdehyde from L-glutamate: step 2/2. Catalyzes the NADPH-dependent reduction of L-glutamate 5-phosphate into L-glutamate 5-semialdehyde and phosphate. The product spontaneously undergoes cyclization to form 1-pyrroline-5-carboxylate. This chain is Gamma-glutamyl phosphate reductase, found in Roseobacter denitrificans (strain ATCC 33942 / OCh 114) (Erythrobacter sp. (strain OCh 114)).